The chain runs to 401 residues: Acetate kinase (401 aa).

Asparagine 7 contacts Mg(2+). Residue lysine 14 coordinates ATP. Arginine 96 lines the substrate pocket. Aspartate 153 acts as the Proton donor/acceptor in catalysis. ATP is bound by residues 212-216 (HLGNG), 287-289 (DMR), and 335-339 (GIGEN). Position 388 (glutamate 388) interacts with Mg(2+).

This sequence belongs to the acetokinase family. Homodimer. Mg(2+) serves as cofactor. The cofactor is Mn(2+).

Its subcellular location is the cytoplasm. The enzyme catalyses acetate + ATP = acetyl phosphate + ADP. The protein operates within metabolic intermediate biosynthesis; acetyl-CoA biosynthesis; acetyl-CoA from acetate: step 1/2. Functionally, catalyzes the formation of acetyl phosphate from acetate and ATP. Can also catalyze the reverse reaction. The sequence is that of Acetate kinase from Microcystis aeruginosa (strain NIES-843 / IAM M-2473).